Reading from the N-terminus, the 362-residue chain is Phosphoserine aminotransferase (362 aa).

Position 42 (R42) interacts with L-glutamate. Residues 76-77 (AR), W102, T152, D172, and Q195 contribute to the pyridoxal 5'-phosphate site. Position 196 is an N6-(pyridoxal phosphate)lysine (K196). 237–238 (NT) is a binding site for pyridoxal 5'-phosphate.

Belongs to the class-V pyridoxal-phosphate-dependent aminotransferase family. SerC subfamily. As to quaternary structure, homodimer. The cofactor is pyridoxal 5'-phosphate.

Its subcellular location is the cytoplasm. It carries out the reaction O-phospho-L-serine + 2-oxoglutarate = 3-phosphooxypyruvate + L-glutamate. It catalyses the reaction 4-(phosphooxy)-L-threonine + 2-oxoglutarate = (R)-3-hydroxy-2-oxo-4-phosphooxybutanoate + L-glutamate. Its pathway is amino-acid biosynthesis; L-serine biosynthesis; L-serine from 3-phospho-D-glycerate: step 2/3. It functions in the pathway cofactor biosynthesis; pyridoxine 5'-phosphate biosynthesis; pyridoxine 5'-phosphate from D-erythrose 4-phosphate: step 3/5. Functionally, catalyzes the reversible conversion of 3-phosphohydroxypyruvate to phosphoserine and of 3-hydroxy-2-oxo-4-phosphonooxybutanoate to phosphohydroxythreonine. In Haemophilus influenzae (strain ATCC 51907 / DSM 11121 / KW20 / Rd), this protein is Phosphoserine aminotransferase.